A 114-amino-acid chain; its full sequence is PDZK1-interacting protein 1 (114 aa).

Residues 1–28 (MSALSLLILGLLTAVPPASCQQGLGNLQ) are Extracellular-facing. Residues 29-51 (PWMQGLIAVAVFLVLVAIAFAVN) traverse the membrane as a helical segment. At 52–114 (HFWCQEEPEP…EEGKVRSTPM (63 aa)) the chain is on the cytoplasmic side. Ser-85 is modified (phosphoserine). The segment at 94–114 (EHENAYENVPEEEGKVRSTPM) is disordered. The span at 105 to 114 (EEGKVRSTPM) shows a compositional bias: basic and acidic residues.

The protein belongs to the PDZK1-interacting protein 1/SMIM24 family. As to quaternary structure, forms a heterodimer (via N-terminal transmembrane helix) with SLC5A2/SGLT2 (via TM13); this interaction enhances SLC5A2 transporter activity. Interacts with PDZK1.

Its subcellular location is the apical cell membrane. Functionally, auxiliary protein of electrogenic Na(+)-coupled sugar symporter SLC5A2/SGLT2 and SLC5A1/SGLT1. Essential for the transporter activity of SLC5A2/SGLT2 but not SLC5A1/SGLT1. The sequence is that of PDZK1-interacting protein 1 from Homo sapiens (Human).